Consider the following 475-residue polypeptide: tRNA-2-methylthio-N(6)-dimethylallyladenosine synthase (475 aa).

One can recognise an MTTase N-terminal domain in the interval 2-119 (AKLHITTWGC…LPEMINQIRS (118 aa)). Residues Cys-11, Cys-48, Cys-82, Cys-156, Cys-160, and Cys-163 each coordinate [4Fe-4S] cluster. A Radical SAM core domain is found at 142–374 (KAEGPTAFVS…QQRINHQAMQ (233 aa)). One can recognise a TRAM domain in the interval 377–440 (RLMLGTEQRI…SNSLRGEVIR (64 aa)).

Belongs to the methylthiotransferase family. MiaB subfamily. Monomer. [4Fe-4S] cluster serves as cofactor.

Its subcellular location is the cytoplasm. The enzyme catalyses N(6)-dimethylallyladenosine(37) in tRNA + (sulfur carrier)-SH + AH2 + 2 S-adenosyl-L-methionine = 2-methylsulfanyl-N(6)-dimethylallyladenosine(37) in tRNA + (sulfur carrier)-H + 5'-deoxyadenosine + L-methionine + A + S-adenosyl-L-homocysteine + 2 H(+). Catalyzes the methylthiolation of N6-(dimethylallyl)adenosine (i(6)A), leading to the formation of 2-methylthio-N6-(dimethylallyl)adenosine (ms(2)i(6)A) at position 37 in tRNAs that read codons beginning with uridine. This Haemophilus ducreyi (strain 35000HP / ATCC 700724) protein is tRNA-2-methylthio-N(6)-dimethylallyladenosine synthase.